The following is a 310-amino-acid chain: HPr kinase/phosphorylase (310 aa).

Active-site residues include His-136 and Lys-157. 151 to 158 (GDSGIGKS) is an ATP binding site. Mg(2+) is bound at residue Ser-158. Catalysis depends on Asp-175, which acts as the Proton acceptor; for phosphorylation activity. Proton donor; for dephosphorylation activity. The important for the catalytic mechanism of both phosphorylation and dephosphorylation stretch occupies residues 199–208 (LEIRGLGIIN). Position 200 (Glu-200) interacts with Mg(2+). Arg-241 is an active-site residue. The tract at residues 262–267 (PVRPGR) is important for the catalytic mechanism of dephosphorylation.

It belongs to the HPrK/P family. Homohexamer. Requires Mg(2+) as cofactor.

The enzyme catalyses [HPr protein]-L-serine + ATP = [HPr protein]-O-phospho-L-serine + ADP + H(+). It catalyses the reaction [HPr protein]-O-phospho-L-serine + phosphate + H(+) = [HPr protein]-L-serine + diphosphate. Its function is as follows. Catalyzes the ATP- as well as the pyrophosphate-dependent phosphorylation of a specific serine residue in HPr, a phosphocarrier protein of the phosphoenolpyruvate-dependent sugar phosphotransferase system (PTS). HprK/P also catalyzes the pyrophosphate-producing, inorganic phosphate-dependent dephosphorylation (phosphorolysis) of seryl-phosphorylated HPr (P-Ser-HPr). The two antagonistic activities of HprK/P are regulated by several intracellular metabolites, which change their concentration in response to the absence or presence of rapidly metabolisable carbon sources (glucose, fructose, etc.) in the growth medium. Therefore, by controlling the phosphorylation state of HPr, HPrK/P is a sensor enzyme that plays a major role in the regulation of carbon metabolism and sugar transport: it mediates carbon catabolite repression (CCR), and regulates PTS-catalyzed carbohydrate uptake and inducer exclusion. The polypeptide is HPr kinase/phosphorylase (Staphylococcus aureus (strain Mu3 / ATCC 700698)).